The sequence spans 317 residues: UAP56-interacting factor (317 aa).

Met-1 is subject to N-acetylmethionine. The segment at 1–23 (MNRFGTRLVGATATTPPAPKARS) is disordered. Thr-14 is subject to Phosphothreonine. A Phosphoserine modification is found at Ser-23. The UAP56-binding motif motif lies at 26–44 (NLDKIDMSLDEIIKLNRKE). 2 positions are modified to phosphoserine: Ser-60 and Ser-117. A Glycyl lysine isopeptide (Lys-Gly) (interchain with G-Cter in SUMO1) cross-link involves residue Lys-139. Lys-260 participates in a covalent cross-link: Glycyl lysine isopeptide (Lys-Gly) (interchain with G-Cter in SUMO2).

Belongs to the UIF family. As to quaternary structure, interacts with DDX39B/UAP56 and NXF1; interaction with DDX39B/UAP56 and NXF1 are mutually exclusive. Interacts with SSRP1; required for its recruitment to mRNAs. Interacts with CHTOP.

The protein resides in the nucleus. The protein localises to the nucleoplasm. It is found in the nucleus speckle. In terms of biological role, required for mRNA export from the nucleus to the cytoplasm. Acts as an adapter that uses the DDX39B/UAP56-NFX1 pathway to ensure efficient mRNA export and delivering to the nuclear pore. Associates with spliced and unspliced mRNAs simultaneously with ALYREF/THOC4. The chain is UAP56-interacting factor (Fyttd1) from Rattus norvegicus (Rat).